The chain runs to 141 residues: High mobility group B protein 3 (141 aa).

Basic and acidic residues-rich tracts occupy residues 1 to 12 and 70 to 110; these read MKGAKSKAETRS and GGEK…LEEG. Disordered regions lie at residues 1–40 and 54–141; these read MKGAKSKAETRSTKLSVTKKPAKGAKGAAKDPNKPKRPSS and KEEH…EDDD. The HMG box DNA-binding region spans 35–104; the sequence is PKRPSSAFFV…EYEKNMKAYN (70 aa). The residue at position 122 (serine 122) is a Phosphoserine. A compositionally biased stretch (acidic residues) spans 124–141; it reads VNDEDDAEDGSEEEEDDD.

The protein belongs to the HMGB family. Expressed in lateral roots, root tips, stems, cotyledons, leaves and flowers (excluding ovary and pedicels).

It is found in the nucleus. Its subcellular location is the cytoplasm. The protein localises to the cytosol. Functionally, binds preferentially double-stranded DNA. In Arabidopsis thaliana (Mouse-ear cress), this protein is High mobility group B protein 3 (HMGB3).